Reading from the N-terminus, the 716-residue chain is MSGSKKKKVTKAERLKLLQEEEERRLKEEEEARLKYEKEEMERLEIQRIEKEKWHRLEAKDLERRNEELEELYLLERCFPEAEKLKQETKLLSQWKHYIQCDGSPDPSVAQEMNTFISLWKEKTNETFEEVIEKSKVVLNLIEKLKFILLETPPCDLQDKNIIQYQESILQLQELLHLKFGVATEILLKQASTLADLDSGNMEKVIKDENVTLYVWANLKKNPRHRSVRFSETQIGFEIPRILATSDIAVRLLHTHYDHVSALHPVSTPSKEYTSAVTELVKDDVKNVEKAISKEVEEESKQQERGSHLIQEEEIKVEEEQGDIEVKMSSAEEESEAIKCEREMKVLSETVSAAQLLLVENSSEKPDFFEDNVVDLCQFTTLGGVYHLDILELPPQCKPVKGWMIVEILKEGLQKYTYPPETTEEFETENAFPPIEVTLEVHENVIFFEDPVVVRWDAEGKHWRTDGISNVSYKPKERLVTFSLDTFGPVTLIQDAHINMPYQSWELRPLDVNKVLLTVTTVFTEIQIQIKENLCMLSSIKLKDKKHISILEGTWMTPIPFIIALKEAGLNIFPTRHSHFYVIINNKVPLVEVKAYRQMALLSSAFAFGWSKWNLLCNSTKVVFKVREHLTEACTENPNWALLMFSGDRAQRLKIKEESEAFSEALKEETEFHSTLYHMVKDFASEEAMEKVRSSNCQFVNSVCHMLLSTRLLSYS.

The protein belongs to the DNAI7 family. Part of the multisubunit axonemal dynein complex formed at least of two heavy chains and a number of intermediate and light chains. Interacts with tubulin. Associates with microtubule. In terms of processing, ubiquitinated. Ubiquitination leads to its degradation through the 26S proteasome. Ubiquitin-proteasome-mediated DNAI7 degradation occurs in mitosis.

Its subcellular location is the cell projection. The protein localises to the cilium. It localises to the cytoplasm. Its function is as follows. Via its association with the multisubunit axonemal dynein complex, is potentially involved in the regulation of cilia function. May also act as a cell cycle regulator. The polypeptide is Dynein axonemal intermediate chain 7 (Homo sapiens (Human)).